The sequence spans 290 residues: UPF0750 membrane protein YdeO (290 aa).

5 consecutive transmembrane segments (helical) span residues 18–38 (IIMV…VLIP), 56–76 (LFNL…VWLG), 83–103 (SFAL…SFFH), 112–132 (DTLL…GLAL), and 165–185 (LFVF…LSVI).

Belongs to the UPF0750 family.

The protein localises to the cell membrane. The sequence is that of UPF0750 membrane protein YdeO (ydeO) from Bacillus subtilis (strain 168).